The chain runs to 92 residues: UPF0358 protein Exig_1994 (92 aa).

It belongs to the UPF0358 family.

The chain is UPF0358 protein Exig_1994 from Exiguobacterium sibiricum (strain DSM 17290 / CCUG 55495 / CIP 109462 / JCM 13490 / 255-15).